We begin with the raw amino-acid sequence, 99 residues long: Large ribosomal subunit protein uL23 (99 aa).

It belongs to the universal ribosomal protein uL23 family. Part of the 50S ribosomal subunit. Contacts protein L29, and trigger factor when it is bound to the ribosome.

One of the early assembly proteins it binds 23S rRNA. One of the proteins that surrounds the polypeptide exit tunnel on the outside of the ribosome. Forms the main docking site for trigger factor binding to the ribosome. This is Large ribosomal subunit protein uL23 from Leifsonia xyli subsp. xyli (strain CTCB07).